Reading from the N-terminus, the 424-residue chain is STAM-binding protein (424 aa).

The segment at 1-127 is interaction with CHMP3; the sequence is MSDHGDVSLP…YTEYNEEKKK (127 aa). Residues S2 and S48 each carry the phosphoserine modification. An interaction with STAM region spans residues 227 to 231; the sequence is PAKPP. Residues S243, S245, and S247 each carry the phosphoserine modification. In terms of domain architecture, MPN spans 257 to 388; it reads VVVPGRLCPQ…LTDHGLEEIS (132 aa). Residues H335, H337, D348, H350, C390, H396, and H398 each coordinate Zn(2+). The short motif at 335-348 is the JAMM motif element; the sequence is HTHPTQTAFLSSVD.

It belongs to the peptidase M67C family. As to quaternary structure, interacts with STAM. Interacts with SMAD6 and SMAD7. Interacts with CHMP3; the interaction appears to relieve the autoinhibition of CHMP3. Interacts with SMURF2 and RNF11; this interaction promotes ubiquitination. The cofactor is Zn(2+). Phosphorylated after BMP type I receptor activation. In terms of processing, ubiquitinated by SMURF2 in the presence of RNF11. As to expression, ubiquitously expressed.

The protein resides in the nucleus. It localises to the membrane. Its subcellular location is the cytoplasm. The protein localises to the early endosome. Inhibited by N-ethylmaleimide. Strongly and specifically inhibited by ubiquitin variants UbV(SP.2) and UbV(SP.3). Also inhibited by UbV(SP.1); an ubiquitin variant that also inhibits STAMBPL1. Zinc metalloprotease that specifically cleaves 'Lys-63'-linked polyubiquitin chains. Does not cleave 'Lys-48'-linked polyubiquitin chains. Plays a role in signal transduction for cell growth and MYC induction mediated by IL-2 and GM-CSF. Potentiates BMP (bone morphogenetic protein) signaling by antagonizing the inhibitory action of SMAD6 and SMAD7. Has a key role in regulation of cell surface receptor-mediated endocytosis and ubiquitin-dependent sorting of receptors to lysosomes. Endosomal localization of STAMBP is required for efficient EGFR degradation but not for its internalization. Involved in the negative regulation of PI3K-AKT-mTOR and RAS-MAP signaling pathways. The chain is STAM-binding protein (STAMBP) from Homo sapiens (Human).